Here is an 89-residue protein sequence, read N- to C-terminus: DNA-directed RNA polymerase subunit omega (89 aa).

It belongs to the RNA polymerase subunit omega family. The RNAP catalytic core consists of 2 alpha, 1 beta, 1 beta' and 1 omega subunit. When a sigma factor is associated with the core the holoenzyme is formed, which can initiate transcription.

The catalysed reaction is RNA(n) + a ribonucleoside 5'-triphosphate = RNA(n+1) + diphosphate. Functionally, promotes RNA polymerase assembly. Latches the N- and C-terminal regions of the beta' subunit thereby facilitating its interaction with the beta and alpha subunits. This is DNA-directed RNA polymerase subunit omega from Idiomarina loihiensis (strain ATCC BAA-735 / DSM 15497 / L2-TR).